The chain runs to 149 residues: 2S seed storage albumin protein (149 aa).

The signal sequence occupies residues 1-22; it reads MKLFIILATATLLIAATQATYP. 4 cysteine pairs are disulfide-bonded: Cys38–Cys98, Cys52–Cys87, Cys88–Cys133, and Cys100–Cys140. The tract at residues 121 to 128 is igE-binding; sequence EGVRDLKE.

This sequence belongs to the 2S seed storage albumins family. Expressed in seeds (at protein level).

Its function is as follows. Seed storage protein. This is 2S seed storage albumin protein from Fagopyrum esculentum (Common buckwheat).